The chain runs to 331 residues: Mycothiol acetyltransferase (331 aa).

E33 serves as a coordination point for 1D-myo-inositol 2-(L-cysteinylamino)-2-deoxy-alpha-D-glucopyranoside. Low complexity predominate over residues 59–86 (HAAEATAGSAASADPADPADPAAPADPA). Residues 59–89 (HAAEATAGSAASADPADPADPAAPADPADPA) are disordered. 115-120 (RRGHGS) contributes to the acetyl-CoA binding site. One can recognise an N-acetyltransferase domain in the interval 183-331 (LRLDTFEESR…DVQLRATERG (149 aa)). 3 residues coordinate 1D-myo-inositol 2-(L-cysteinylamino)-2-deoxy-alpha-D-glucopyranoside: E210, K249, and E261. 265 to 267 (VAT) contacts acetyl-CoA. Y299 is a binding site for 1D-myo-inositol 2-(L-cysteinylamino)-2-deoxy-alpha-D-glucopyranoside. Acetyl-CoA is bound at residue 304–309 (NAPALR).

This sequence belongs to the acetyltransferase family. MshD subfamily. Monomer.

The catalysed reaction is 1D-myo-inositol 2-(L-cysteinylamino)-2-deoxy-alpha-D-glucopyranoside + acetyl-CoA = mycothiol + CoA + H(+). Its function is as follows. Catalyzes the transfer of acetyl from acetyl-CoA to desacetylmycothiol (Cys-GlcN-Ins) to form mycothiol. This is Mycothiol acetyltransferase from Brachybacterium faecium (strain ATCC 43885 / DSM 4810 / JCM 11609 / LMG 19847 / NBRC 14762 / NCIMB 9860 / 6-10).